The sequence spans 503 residues: D-alanine--D-alanyl carrier protein ligase (503 aa).

Position 151–152 (151–152 (TS)) interacts with ATP. Aspartate 196 lines the D-alanine pocket. 291–296 (NTYGPT) contributes to the ATP binding site. Valine 300 contributes to the D-alanine binding site. ATP is bound by residues aspartate 382 and lysine 491. Lysine 491 is a D-alanine binding site.

Belongs to the ATP-dependent AMP-binding enzyme family. DltA subfamily.

The protein resides in the cytoplasm. It catalyses the reaction holo-[D-alanyl-carrier protein] + D-alanine + ATP = D-alanyl-[D-alanyl-carrier protein] + AMP + diphosphate. The protein operates within cell wall biogenesis; lipoteichoic acid biosynthesis. Its function is as follows. Catalyzes the first step in the D-alanylation of lipoteichoic acid (LTA), the activation of D-alanine and its transfer onto the D-alanyl carrier protein (Dcp) DltC. In an ATP-dependent two-step reaction, forms a high energy D-alanyl-AMP intermediate, followed by transfer of the D-alanyl residue as a thiol ester to the phosphopantheinyl prosthetic group of the Dcp. D-alanylation of LTA plays an important role in modulating the properties of the cell wall in Gram-positive bacteria, influencing the net charge of the cell wall. This is D-alanine--D-alanyl carrier protein ligase from Bacillus velezensis (strain DSM 23117 / BGSC 10A6 / LMG 26770 / FZB42) (Bacillus amyloliquefaciens subsp. plantarum).